Consider the following 189-residue polypeptide: Threonylcarbamoyl-AMP synthase (189 aa).

One can recognise a YrdC-like domain in the interval 3 to 189 (TTSVTEAAEC…NALTGEVIRP (187 aa)).

It belongs to the SUA5 family. TsaC subfamily.

It localises to the cytoplasm. It carries out the reaction L-threonine + hydrogencarbonate + ATP = L-threonylcarbamoyladenylate + diphosphate + H2O. Its function is as follows. Required for the formation of a threonylcarbamoyl group on adenosine at position 37 (t(6)A37) in tRNAs that read codons beginning with adenine. Catalyzes the conversion of L-threonine, HCO(3)(-)/CO(2) and ATP to give threonylcarbamoyl-AMP (TC-AMP) as the acyladenylate intermediate, with the release of diphosphate. The chain is Threonylcarbamoyl-AMP synthase from Acinetobacter baumannii (strain ACICU).